Reading from the N-terminus, the 356-residue chain is Dihydroorotate dehydrogenase (quinone) (356 aa).

FMN is bound by residues 67-71 (AGFDK) and T91. Residue K71 coordinates substrate. 116 to 120 (NRMGF) is a binding site for substrate. N153 and N186 together coordinate FMN. Position 186 (N186) interacts with substrate. Catalysis depends on S189, which acts as the Nucleophile. A substrate-binding site is contributed by N191. FMN contacts are provided by K228 and T256. Position 257–258 (257–258 (NT)) interacts with substrate. FMN-binding positions include G282, G311, and 332 to 333 (YT).

This sequence belongs to the dihydroorotate dehydrogenase family. Type 2 subfamily. Monomer. It depends on FMN as a cofactor.

The protein localises to the cell membrane. It catalyses the reaction (S)-dihydroorotate + a quinone = orotate + a quinol. The protein operates within pyrimidine metabolism; UMP biosynthesis via de novo pathway; orotate from (S)-dihydroorotate (quinone route): step 1/1. Functionally, catalyzes the conversion of dihydroorotate to orotate with quinone as electron acceptor. The polypeptide is Dihydroorotate dehydrogenase (quinone) (Pseudarthrobacter chlorophenolicus (strain ATCC 700700 / DSM 12829 / CIP 107037 / JCM 12360 / KCTC 9906 / NCIMB 13794 / A6) (Arthrobacter chlorophenolicus)).